A 611-amino-acid chain; its full sequence is tRNA uridine 5-carboxymethylaminomethyl modification enzyme MnmG (611 aa).

Residue 12 to 17 (GGGHSG) participates in FAD binding. 271 to 285 (GPRYCPSIEEKVYRF) lines the NAD(+) pocket.

The protein belongs to the MnmG family. Homodimer. Heterotetramer of two MnmE and two MnmG subunits. FAD serves as cofactor.

The protein resides in the cytoplasm. Its function is as follows. NAD-binding protein involved in the addition of a carboxymethylaminomethyl (cmnm) group at the wobble position (U34) of certain tRNAs, forming tRNA-cmnm(5)s(2)U34. In Karelsulcia muelleri (strain GWSS) (Sulcia muelleri), this protein is tRNA uridine 5-carboxymethylaminomethyl modification enzyme MnmG.